We begin with the raw amino-acid sequence, 391 residues long: Probable methanogen homoaconitase large subunit (391 aa).

[4Fe-4S] cluster-binding residues include C275, C333, and C336.

This sequence belongs to the aconitase/IPM isomerase family. LeuC type 2 subfamily. In terms of assembly, heterotetramer of 2 HacA and 2 HacB proteins.

The catalysed reaction is (2R)-homocitrate = (2R,3S)-homoisocitrate. The enzyme catalyses (2R)-homocitrate = cis-homoaconitate + H2O. It catalyses the reaction (2R,3S)-homoisocitrate = cis-homoaconitate + H2O. It carries out the reaction cis-(homo)2aconitate + H2O = (2R,3S)-iso(homo)2citrate. The catalysed reaction is cis-(homo)3aconitate + H2O = (2R,3S)-iso(homo)3citrate. It participates in organic acid metabolism; 2-oxosuberate biosynthesis. Its function is as follows. Component of a hydro-lyase with broad substrate specificity for cis-unsaturated tricarboxylic acids. Catalyzes both the reversible dehydration of (R)-homocitrate ((R)-2-hydroxybutane-1,2,4-tricarboxylate) to produce cis-homoaconitate ((Z)-but-1-ene-1,2,4-tricarboxylate), and its hydration to homoisocitrate ((1R,2S)-1-hydroxybutane-1,2,4-tricarboxylate). Is also able to hydrate the analogous longer chain substrates cis-homo(2)-aconitate, cis-homo(3)-aconitate. These reactions are part of the biosynthesis pathway of coenzyme B. This Methanosarcina mazei (strain ATCC BAA-159 / DSM 3647 / Goe1 / Go1 / JCM 11833 / OCM 88) (Methanosarcina frisia) protein is Probable methanogen homoaconitase large subunit (hacA).